Consider the following 387-residue polypeptide: Aminodeoxyfutalosine synthase (387 aa).

One can recognise a Radical SAM core domain in the interval 52-279 (VHFNVNRHLN…ARTQMATGAE (228 aa)). The [4Fe-4S] cluster site is built by Cys66, Cys70, and Cys73.

It belongs to the radical SAM superfamily. MqnE family. [4Fe-4S] cluster serves as cofactor.

The catalysed reaction is 3-[(1-carboxyvinyl)-oxy]benzoate + S-adenosyl-L-methionine + H2O = 6-amino-6-deoxyfutalosine + hydrogencarbonate + L-methionine + H(+). Its pathway is quinol/quinone metabolism; menaquinone biosynthesis. In terms of biological role, radical SAM enzyme that catalyzes the addition of the adenosyl radical to the double bond of 3-[(1-carboxyvinyl)oxy]benzoate, leading to aminodeoxyfutalosine (AFL), a key intermediate in the formation of menaquinone (MK, vitamin K2) from chorismate. The protein is Aminodeoxyfutalosine synthase of Streptomyces coelicolor (strain ATCC BAA-471 / A3(2) / M145).